A 419-amino-acid polypeptide reads, in one-letter code: Inositol-tetrakisphosphate 1-kinase (419 aa).

K18 serves as a coordination point for 1D-myo-inositol 1,3,4-trisphosphate. ATP-binding residues include R106 and K157. The 218-residue stretch at 117-334 (EAYMKDDRIC…TGGAATEEVA (218 aa)) folds into the ATP-grasp domain. H167 and K199 together coordinate 1D-myo-inositol 1,3,4-trisphosphate. ATP is bound by residues 188–199 (QNFINHNAVLYK), S214, S232, and S236. The Mg(2+) site is built by D281, D295, and N297. N297 is a binding site for 1D-myo-inositol 1,3,4-trisphosphate. At K388 the chain carries N6-acetyllysine; by EP300 and CREBBP. S401 carries the phosphoserine modification. At K415 the chain carries N6-acetyllysine; by EP300 and CREBBP.

It belongs to the ITPK1 family. As to quaternary structure, monomer. Interacts with GPS1/COPS1. Requires Mg(2+) as cofactor. In terms of processing, acetylation by EP300 and CREBBP destabilizes ITPK1, and down-regulates enzymatic activity. Deacetylated by SIRT1.

It carries out the reaction 1D-myo-inositol 3,4,5,6-tetrakisphosphate + ATP = 1D-myo-inositol 1,3,4,5,6-pentakisphosphate + ADP + H(+). The enzyme catalyses 1D-myo-inositol 1,3,4-trisphosphate + ATP = 1D-myo-inositol 1,3,4,5-tetrakisphosphate + ADP + H(+). The catalysed reaction is 1D-myo-inositol 1,3,4-trisphosphate + ATP = 1D-myo-inositol 1,3,4,6-tetrakisphosphate + ADP + H(+). It catalyses the reaction 1D-myo-inositol 3,4,6-trisphosphate + ATP = 1D-myo-inositol 1,3,4,6-tetrakisphosphate + ADP + H(+). It carries out the reaction 1D-myo-inositol 1,3,4-trisphosphate + 1D-myo-inositol 1,3,4,5,6-pentakisphosphate = 1D-myo-inositol 3,4,5,6-tetrakisphosphate + 1D-myo-inositol 1,3,4,6-tetrakisphosphate. The enzyme catalyses 1D-myo-inositol 1,3,4-trisphosphate + 1D-myo-inositol 1,3,4,5,6-pentakisphosphate = 1D-myo-inositol 3,4,5,6-tetrakisphosphate + 1D-myo-inositol 1,3,4,5-tetrakisphosphate. Kinase that can phosphorylate various inositol polyphosphate such as Ins(3,4,5,6)P4 or Ins(1,3,4)P3. Phosphorylates Ins(3,4,5,6)P4 at position 1 to form Ins(1,3,4,5,6)P5. This reaction is thought to have regulatory importance, since Ins(3,4,5,6)P4 is an inhibitor of plasma membrane Ca(2+)-activated Cl(-) channels, while Ins(1,3,4,5,6)P5 is not. Also phosphorylates Ins(1,3,4)P3 on O-5 and O-6 to form Ins(1,3,4,6)P4, an essential molecule in the hexakisphosphate (InsP6) pathway. Also acts as an inositol polyphosphate phosphatase that dephosphorylates Ins(1,3,4,5)P4 and Ins(1,3,4,6)P4 to Ins(1,3,4)P3, and Ins(1,3,4,5,6)P5 to Ins(3,4,5,6)P4. May also act as an isomerase that interconverts the inositol tetrakisphosphate isomers Ins(1,3,4,5)P4 and Ins(1,3,4,6)P4 in the presence of ADP and magnesium. Probably acts as the rate-limiting enzyme of the InsP6 pathway. Modifies TNF-alpha-induced apoptosis by interfering with the activation of TNFRSF1A-associated death domain. Plays an important role in MLKL-mediated necroptosis. Produces highly phosphorylated inositol phosphates such as inositolhexakisphosphate (InsP6) which bind to MLKL mediating the release of an N-terminal auto-inhibitory region leading to its activation. Essential for activated phospho-MLKL to oligomerize and localize to the cell membrane during necroptosis. The polypeptide is Inositol-tetrakisphosphate 1-kinase (Mus musculus (Mouse)).